Consider the following 277-residue polypeptide: Transcription factor WRKY19 (277 aa).

Positions 100 to 168 form a DNA-binding region, WRKY; sequence QDTASLDDGL…YLGDHTCGQA (69 aa).

It belongs to the WRKY group III family.

The protein resides in the nucleus. In terms of biological role, may play a role in defense responses. In Oryza sativa subsp. japonica (Rice), this protein is Transcription factor WRKY19.